The chain runs to 407 residues: Eukaryotic initiation factor 4A-II (407 aa).

Positions 1 to 22 (MSGGSADYNREHGGPEGMDPDG) are disordered. The short motif at 33 to 61 (DNFDDMNLKESLLRGIYAYGFEKPSAIQQ) is the Q motif element. The region spanning 64–235 (IIPCIKGYDV…KKFMRDPIRI (172 aa)) is the Helicase ATP-binding domain. ATP is bound at residue 77-84 (AQSGTGKT). T159 bears the Phosphothreonine mark. The DEAD box motif lies at 183 to 186 (DEAD). The Helicase C-terminal domain occupies 246 to 407 (GIKQFYINVE…EMPMNVADLI (162 aa)).

Belongs to the DEAD box helicase family. eIF4A subfamily. In terms of assembly, eIF4F is a multi-subunit complex, the composition of which varies with external and internal environmental conditions. It is composed of at least EIF4A, EIF4E and EIF4G1/EIFFG3. Interacts with EIF4E. May interact with NOM1.

The enzyme catalyses ATP + H2O = ADP + phosphate + H(+). Functionally, ATP-dependent RNA helicase which is a subunit of the eIF4F complex involved in cap recognition and is required for mRNA binding to ribosome. In the current model of translation initiation, eIF4A unwinds RNA secondary structures in the 5'-UTR of mRNAs which is necessary to allow efficient binding of the small ribosomal subunit, and subsequent scanning for the initiator codon. The sequence is that of Eukaryotic initiation factor 4A-II (EIF4A2) from Bos taurus (Bovine).